Here is a 261-residue protein sequence, read N- to C-terminus: Tyrosine phosphatase-like protein H5 (261 aa).

The 236-residue stretch at 26–261 (LIKKEHDKVL…ESVEQEYFVP (236 aa)) folds into the Tyrosine-protein phosphatase domain.

It belongs to the protein-tyrosine phosphatase family.

This Microplitis demolitor bracovirus (isolate Webb) (MdBV) protein is Tyrosine phosphatase-like protein H5 (H6).